A 630-amino-acid polypeptide reads, in one-letter code: DNA topoisomerase 4 subunit B (630 aa).

ATP contacts are provided by residues Tyr5, Asn42, Asp69, 110–116 (GLHGVGI), and Lys334. A Toprim domain is found at 412-525 (TELFLVEGDS…HGHVYVALPP (114 aa)). Mg(2+) is bound by residues Glu418, Asp490, and Asp492.

It belongs to the type II topoisomerase family. ParE type 1 subfamily. As to quaternary structure, heterotetramer composed of ParC and ParE. It depends on Mg(2+) as a cofactor. Mn(2+) serves as cofactor. Ca(2+) is required as a cofactor.

The enzyme catalyses ATP-dependent breakage, passage and rejoining of double-stranded DNA.. Its activity is regulated as follows. Pyrrolopyrimidines inhibit both GyrB and its paralog in topoisomerase IV (parE). Topoisomerase IV is essential for chromosome segregation; it is the principal protein responsible for decatenating newly replicated chromosomes. It relaxes supercoiled DNA. MukB stimulates the relaxation activity of topoisomerase IV and also has a modest effect on decatenation. The chain is DNA topoisomerase 4 subunit B from Escherichia coli (strain K12).